We begin with the raw amino-acid sequence, 446 residues long: N-succinylarginine dihydrolase (446 aa).

Residues 19-28, Asn110, and 137-138 contribute to the substrate site; these read AGLSFGNVAS and HR. Glu174 is a catalytic residue. Arg213 is a substrate binding site. The active site involves His249. Residues Asp251 and Asn364 each coordinate substrate. Catalysis depends on Cys370, which acts as the Nucleophile.

It belongs to the succinylarginine dihydrolase family. In terms of assembly, homodimer.

The catalysed reaction is N(2)-succinyl-L-arginine + 2 H2O + 2 H(+) = N(2)-succinyl-L-ornithine + 2 NH4(+) + CO2. It participates in amino-acid degradation; L-arginine degradation via AST pathway; L-glutamate and succinate from L-arginine: step 2/5. Its function is as follows. Catalyzes the hydrolysis of N(2)-succinylarginine into N(2)-succinylornithine, ammonia and CO(2). In Burkholderia thailandensis (strain ATCC 700388 / DSM 13276 / CCUG 48851 / CIP 106301 / E264), this protein is N-succinylarginine dihydrolase.